The sequence spans 258 residues: 5-oxoprolinase subunit A 2 (258 aa).

This sequence belongs to the LamB/PxpA family. As to quaternary structure, forms a complex composed of PxpA, PxpB and PxpC.

The enzyme catalyses 5-oxo-L-proline + ATP + 2 H2O = L-glutamate + ADP + phosphate + H(+). Functionally, catalyzes the cleavage of 5-oxoproline to form L-glutamate coupled to the hydrolysis of ATP to ADP and inorganic phosphate. This Pseudomonas putida (strain ATCC 47054 / DSM 6125 / CFBP 8728 / NCIMB 11950 / KT2440) protein is 5-oxoprolinase subunit A 2.